Consider the following 122-residue polypeptide: MTTFRFCRDCNNMLYPREDKENNRLLFECRTCSYIEEAGSPLVYRHELITNIGETAGVVQDIGSDPTLPRSDRECPKCHSRENVFFQSQQRRKDTSMVLFFVCLACSHIFTSDQKNKRTQFS.

Zn(2+) contacts are provided by Cys-7, Cys-10, Cys-29, Cys-32, Cys-75, Cys-78, Cys-103, and Cys-106. The segment at 7–32 adopts a C4-type zinc-finger fold; it reads CRDCNNMLYPREDKENNRLLFECRTC. The segment at 71–111 adopts a TFIIS-type zinc-finger fold; that stretch reads SDRECPKCHSRENVFFQSQQRRKDTSMVLFFVCLACSHIFT.

The protein belongs to the archaeal RpoM/eukaryotic RPA12/RPB9/RPC11 RNA polymerase family. In terms of assembly, component of the RNA polymerase II (Pol II) complex consisting of 12 subunits.

Its subcellular location is the nucleus. It is found in the nucleolus. DNA-dependent RNA polymerase catalyzes the transcription of DNA into RNA using the four ribonucleoside triphosphates as substrates. Component of RNA polymerase II which synthesizes mRNA precursors and many functional non-coding RNAs. Pol II is the central component of the basal RNA polymerase II transcription machinery. It is composed of mobile elements that move relative to each other. RPB9 is part of the upper jaw surrounding the central large cleft and thought to grab the incoming DNA template. Involved in the regulation of transcription elongation. The chain is DNA-directed RNA polymerase II subunit RPB9 (RPB9) from Candida glabrata (strain ATCC 2001 / BCRC 20586 / JCM 3761 / NBRC 0622 / NRRL Y-65 / CBS 138) (Yeast).